The sequence spans 241 residues: MRSGVIAQKVGMTRIFTDAGEHVPVTVLKVESCQVVAHRTLDKNGYVAVQLGAGRRKPKNVTRAERGHFAVAQVEPKHKLAEFRVPEEALIPVGAEITADHFVVGQYVDVTGTTIGKGFAGGMKRHNFGGLRATHGVSISHRSIGSTGGRQDPGKTFKNKKMPGHMGDVTVTTQNLKVVMTDVERGLIAVEGAVPGHAGGWITVRDAVKKKLPAEAPKPGAFKLNGSEAAPAAEAVNEEGA.

Disordered stretches follow at residues 140-168 (SHRS…HMGD) and 216-241 (APKP…EEGA). Q151 bears the N5-methylglutamine mark.

This sequence belongs to the universal ribosomal protein uL3 family. As to quaternary structure, part of the 50S ribosomal subunit. Forms a cluster with proteins L14 and L19. Methylated by PrmB.

Its function is as follows. One of the primary rRNA binding proteins, it binds directly near the 3'-end of the 23S rRNA, where it nucleates assembly of the 50S subunit. In Xanthobacter autotrophicus (strain ATCC BAA-1158 / Py2), this protein is Large ribosomal subunit protein uL3.